The chain runs to 314 residues: Malate dehydrogenase (314 aa).

Residues 13-18 (GGGQIG) and aspartate 37 contribute to the NAD(+) site. Substrate is bound by residues arginine 88 and arginine 94. Residues asparagine 101 and 124–126 (VAN) contribute to the NAD(+) site. Substrate-binding residues include asparagine 126 and arginine 157. The active-site Proton acceptor is the histidine 181.

This sequence belongs to the LDH/MDH superfamily. MDH type 3 family.

It carries out the reaction (S)-malate + NAD(+) = oxaloacetate + NADH + H(+). In terms of biological role, catalyzes the reversible oxidation of malate to oxaloacetate. This Myxococcus xanthus protein is Malate dehydrogenase.